The primary structure comprises 333 residues: Photosystem II assembly protein Ycf48 (333 aa).

Residues 1-25 (MRVKMFKPLRLVLLIAVSVLLMAAR) form the signal peptide.

This sequence belongs to the Ycf48 family. Part of early PSII assembly complexes which includes D1 (psbA) and PsbI; not found in mature PSII. Binds to the lumenal side of PSII complexes. Interacts with YidC.

The protein resides in the cellular thylakoid lumen. In terms of biological role, a factor required for optimal assembly of photosystem II (PSII), acting in the early stages of PSII assembly. Also plays a role in replacement of photodamaged D1 (psbA). Assists YidC in synthesis of chlorophyll-binding proteins. The sequence is that of Photosystem II assembly protein Ycf48 from Synechococcus sp. (strain JA-2-3B'a(2-13)) (Cyanobacteria bacterium Yellowstone B-Prime).